The following is a 525-amino-acid chain: MQITSNEISVEVNGQSYTLPAGSTLGDALEVSRASYIAGTAVGIIKRAAEKRTEEITEYAIKTPRGELRIELKDPESSSGKLWAEHYKEYEGTYIHWASPEALAFGPFEADIKPFHETGSFEAFDVVFGAGGFDPHNTHLIISRKRHVAEYGAPEDGVFATVVTGRNLIFRLSREDPILSIEPIIEWEQLAEKTCTTDLSTILEDEDSVFTYFEVELSRNSPKGAEHFYALTRKGTLSVDVTTSSFISDDTLREEPVPYENFELRKEGAISVRTVGYGTGRTYISREERPSSLVHSIVGQVITGIELIKLAEKGQKLSVESLPPQIVLLGHSFEEVEPVLTAIGIELVKEGYTEENAVIVKQDPPTTLEILGEAKVTAYGVPREKLIEVELYPERAPKSVDFFRHSLELKTKPVGKLPVHMIYDNTYLFKTEKEAVKYKEVLPENTPADTVLAGEIGITNQAAKRMGTIGVRLVDDDLFGPTGEKFSSTNIIGRILEPERLIGIEEGDAIYVSEVVRRKTDEQEN.

Belongs to the UPF0288 family.

In Methanosarcina acetivorans (strain ATCC 35395 / DSM 2834 / JCM 12185 / C2A), this protein is UPF0288 protein MA_3997.